The chain runs to 247 residues: 23S rRNA (guanosine-2'-O-)-methyltransferase RlmB (247 aa).

S-adenosyl-L-methionine contacts are provided by Gly-197, Ile-217, and Leu-226.

It belongs to the class IV-like SAM-binding methyltransferase superfamily. RNA methyltransferase TrmH family. RlmB subfamily.

Its subcellular location is the cytoplasm. It catalyses the reaction guanosine(2251) in 23S rRNA + S-adenosyl-L-methionine = 2'-O-methylguanosine(2251) in 23S rRNA + S-adenosyl-L-homocysteine + H(+). In terms of biological role, specifically methylates the ribose of guanosine 2251 in 23S rRNA. This Vibrio cholerae serotype O1 (strain ATCC 39315 / El Tor Inaba N16961) protein is 23S rRNA (guanosine-2'-O-)-methyltransferase RlmB.